Consider the following 279-residue polypeptide: 4-hydroxy-3-methylbut-2-enyl diphosphate reductase (279 aa).

Cys-12 provides a ligand contact to [4Fe-4S] cluster. His-41 and His-74 together coordinate (2E)-4-hydroxy-3-methylbut-2-enyl diphosphate. Dimethylallyl diphosphate contacts are provided by His-41 and His-74. Isopentenyl diphosphate-binding residues include His-41 and His-74. Cys-96 contributes to the [4Fe-4S] cluster binding site. His-124 is a binding site for (2E)-4-hydroxy-3-methylbut-2-enyl diphosphate. His-124 provides a ligand contact to dimethylallyl diphosphate. Residue His-124 coordinates isopentenyl diphosphate. Glu-126 (proton donor) is an active-site residue. Thr-164 is a binding site for (2E)-4-hydroxy-3-methylbut-2-enyl diphosphate. Position 192 (Cys-192) interacts with [4Fe-4S] cluster. (2E)-4-hydroxy-3-methylbut-2-enyl diphosphate is bound by residues Ser-220, Ser-221, Asn-222, and Ser-263. Residues Ser-220, Ser-221, Asn-222, and Ser-263 each coordinate dimethylallyl diphosphate. Residues Ser-220, Ser-221, Asn-222, and Ser-263 each contribute to the isopentenyl diphosphate site.

This sequence belongs to the IspH family. [4Fe-4S] cluster is required as a cofactor.

The catalysed reaction is isopentenyl diphosphate + 2 oxidized [2Fe-2S]-[ferredoxin] + H2O = (2E)-4-hydroxy-3-methylbut-2-enyl diphosphate + 2 reduced [2Fe-2S]-[ferredoxin] + 2 H(+). It catalyses the reaction dimethylallyl diphosphate + 2 oxidized [2Fe-2S]-[ferredoxin] + H2O = (2E)-4-hydroxy-3-methylbut-2-enyl diphosphate + 2 reduced [2Fe-2S]-[ferredoxin] + 2 H(+). Its pathway is isoprenoid biosynthesis; dimethylallyl diphosphate biosynthesis; dimethylallyl diphosphate from (2E)-4-hydroxy-3-methylbutenyl diphosphate: step 1/1. It participates in isoprenoid biosynthesis; isopentenyl diphosphate biosynthesis via DXP pathway; isopentenyl diphosphate from 1-deoxy-D-xylulose 5-phosphate: step 6/6. In terms of biological role, catalyzes the conversion of 1-hydroxy-2-methyl-2-(E)-butenyl 4-diphosphate (HMBPP) into a mixture of isopentenyl diphosphate (IPP) and dimethylallyl diphosphate (DMAPP). Acts in the terminal step of the DOXP/MEP pathway for isoprenoid precursor biosynthesis. In Clostridioides difficile (strain 630) (Peptoclostridium difficile), this protein is 4-hydroxy-3-methylbut-2-enyl diphosphate reductase.